The chain runs to 264 residues: Thymidylate synthase (264 aa).

Arg-21 is a binding site for dUMP. Residue His-51 participates in (6R)-5,10-methylene-5,6,7,8-tetrahydrofolate binding. 126-127 (RR) contacts dUMP. The active-site Nucleophile is Cys-146. Residues 166–169 (RSCD), Asn-177, and 207–209 (HLY) each bind dUMP. Asp-169 lines the (6R)-5,10-methylene-5,6,7,8-tetrahydrofolate pocket. Residue Ala-263 participates in (6R)-5,10-methylene-5,6,7,8-tetrahydrofolate binding.

Belongs to the thymidylate synthase family. Bacterial-type ThyA subfamily. As to quaternary structure, homodimer.

Its subcellular location is the cytoplasm. The enzyme catalyses dUMP + (6R)-5,10-methylene-5,6,7,8-tetrahydrofolate = 7,8-dihydrofolate + dTMP. It participates in pyrimidine metabolism; dTTP biosynthesis. In terms of biological role, catalyzes the reductive methylation of 2'-deoxyuridine-5'-monophosphate (dUMP) to 2'-deoxythymidine-5'-monophosphate (dTMP) while utilizing 5,10-methylenetetrahydrofolate (mTHF) as the methyl donor and reductant in the reaction, yielding dihydrofolate (DHF) as a by-product. This enzymatic reaction provides an intracellular de novo source of dTMP, an essential precursor for DNA biosynthesis. The chain is Thymidylate synthase from Baumannia cicadellinicola subsp. Homalodisca coagulata.